Here is a 571-residue protein sequence, read N- to C-terminus: Podocalyxin (571 aa).

An N-terminal signal peptide occupies residues 1 to 22 (MRPAPPPPLLLLLLLLPPPSLS). Over 23–474 (HDGTIIAATS…EETEDRFSMP (452 aa)) the chain is Extracellular. A disordered region spans residues 94–361 (NTVIAPDQDE…QGDDRIKCES (268 aa)). The segment covering 106–116 (STNPTIATSDS) has biased composition (polar residues). Asn123 carries N-linked (GlcNAc...) asparagine glycosylation. 4 stretches are compositionally biased toward polar residues: residues 126–144 (ILPS…TQTA), 151–169 (NPGT…QTTS), 176–203 (KPSS…STTL), and 218–245 (TASS…SSVT). An N-linked (GlcNAc...) asparagine glycan is attached at Asn199. Residues 282-300 (TTSLPSETESLESPSSESP) show a composition bias toward low complexity. A compositionally biased stretch (pro residues) spans 301-311 (SQPPKLRPTGP). The segment covering 312–322 (PSSGSSGPAAS) has biased composition (low complexity). Asn373 and Asn383 each carry an N-linked (GlcNAc...) asparagine glycan. Residues 475-495 (LIITIVCMASFLLLVAALYGC) traverse the membrane as a helical segment. Over 496-571 (CHQRLSQRKD…DLDEEEDTHL (76 aa)) the chain is Cytoplasmic. Residue Thr531 is modified to Phosphothreonine. Residue Ser550 is modified to Phosphoserine. Residue Thr569 is modified to Phosphothreonine.

It belongs to the podocalyxin family. Found in a complex with EZR, PODXL and NHERF2. Associates with the actin cytoskeleton through complex formation with EZR and NHERF2. Interacts (via the C-terminal PDZ-binding motif DTHL) with NHERF1 (via the PDZ domains); interaction is not detected in glomerular epithelium cells. Interacts (via the C-terminal PDZ-binding motif DTHL) with NHERF2 (via the PDZ 1 domain); interaction is detected in glomerular epithelium cells. Interacts with EZR. Monomer; when associated with the membrane raft. Oligomer; when integrated in the apical membrane. Interacts with NHERF2. Interacts (via the C-terminal PDZ-binding motif DTHL) with NHERF1 (via the PDZ domains); the interaction take place early in the secretory pathway and is necessary for its apical membrane sorting. Post-translationally, N- and O-linked glycosylated. Sialoglycoprotein. In terms of tissue distribution, expressed in glomerular and tubular epithelial cells and peritubular capillaries of the kidney (at protein level). Expressed in heart, lung, renal cortex and medulla, kidney and muscle.

It is found in the apical cell membrane. The protein resides in the membrane raft. The protein localises to the cell projection. Its subcellular location is the lamellipodium. It localises to the filopodium. It is found in the ruffle. The protein resides in the microvillus. The protein localises to the membrane. Involved in the regulation of both adhesion and cell morphology and cancer progression. Functions as an anti-adhesive molecule that maintains an open filtration pathway between neighboring foot processes in the podocyte by charge repulsion. Acts as a pro-adhesive molecule, enhancing the adherence of cells to immobilized ligands, increasing the rate of migration and cell-cell contacts in an integrin-dependent manner. Induces the formation of apical actin-dependent microvilli. Involved in the formation of a preapical plasma membrane subdomain to set up initial epithelial polarization and the apical lumen formation during renal tubulogenesis. Plays a role in cancer development and aggressiveness by inducing cell migration and invasion through its interaction with the actin-binding protein EZR. Affects EZR-dependent signaling events, leading to increased activities of the MAPK and PI3K pathways in cancer cells. This is Podocalyxin (PODXL) from Canis lupus familiaris (Dog).